The primary structure comprises 311 residues: tRNA pseudouridine synthase B (311 aa).

The active-site Nucleophile is Asp49.

The protein belongs to the pseudouridine synthase TruB family. Type 1 subfamily.

The catalysed reaction is uridine(55) in tRNA = pseudouridine(55) in tRNA. Its function is as follows. Responsible for synthesis of pseudouridine from uracil-55 in the psi GC loop of transfer RNAs. The sequence is that of tRNA pseudouridine synthase B from Rhizobium meliloti (strain 1021) (Ensifer meliloti).